Reading from the N-terminus, the 241-residue chain is Interleukin-6 (241 aa).

The N-terminal stretch at 1–26 (MNSFTSALRPGPLGCSLALLLVVATA) is a signal peptide. Residues 32 to 51 (PVREDSNTKASPDKTLTPPG) are disordered. Disulfide bonds link C72–C78 and C101–C111. A glycan (N-linked (GlcNAc...) asparagine) is linked at N108.

It belongs to the IL-6 superfamily. In terms of assembly, component of a hexamer of two molecules each of IL6, IL6R and IL6ST; first binds to IL6R to associate with the signaling subunit IL6ST. Interacts with IL6R (via the N-terminal ectodomain); this interaction may be affected by IL6R-binding with SORL1, hence decreasing IL6 cis signaling. Interacts with SORL1 (via the N-terminal ectodomain); this interaction leads to IL6 internalization and lysosomal degradation. May form a trimeric complex with the soluble SORL1 ectodomain and soluble IL6R receptor; this interaction might stabilize circulating IL6, hence promoting IL6 trans signaling.

It is found in the secreted. Cytokine with a wide variety of biological functions in immunity, tissue regeneration, and metabolism. Binds to IL6R, then the complex associates to the signaling subunit IL6ST/gp130 to trigger the intracellular IL6-signaling pathway. The interaction with the membrane-bound IL6R and IL6ST stimulates 'classic signaling', whereas the binding of IL6 and soluble IL6R to IL6ST stimulates 'trans-signaling'. Alternatively, 'cluster signaling' occurs when membrane-bound IL6:IL6R complexes on transmitter cells activate IL6ST receptors on neighboring receiver cells. In terms of biological role, IL6 is a potent inducer of the acute phase response. Rapid production of IL6 contributes to host defense during infection and tissue injury, but excessive IL6 synthesis is involved in disease pathology. In the innate immune response, is synthesized by myeloid cells, such as macrophages and dendritic cells, upon recognition of pathogens through toll-like receptors (TLRs) at the site of infection or tissue injury. In the adaptive immune response, is required for the differentiation of B cells into immunoglobulin-secreting cells. Plays a major role in the differentiation of CD4(+) T cell subsets. Essential factor for the development of T follicular helper (Tfh) cells that are required for the induction of germinal-center formation. Required to drive naive CD4(+) T cells to the Th17 lineage. Also required for proliferation of myeloma cells and the survival of plasmablast cells. Its function is as follows. Acts as an essential factor in bone homeostasis and on vessels directly or indirectly by induction of VEGF, resulting in increased angiogenesis activity and vascular permeability. Induces, through 'trans-signaling' and synergistically with IL1B and TNF, the production of VEGF. Involved in metabolic controls, is discharged into the bloodstream after muscle contraction increasing lipolysis and improving insulin resistance. 'Trans-signaling' in central nervous system also regulates energy and glucose homeostasis. Mediates, through GLP-1, crosstalk between insulin-sensitive tissues, intestinal L cells and pancreatic islets to adapt to changes in insulin demand. Also acts as a myokine. Plays a protective role during liver injury, being required for maintenance of tissue regeneration. Also has a pivotal role in iron metabolism by regulating HAMP/hepcidin expression upon inflammation or bacterial infection. Through activation of IL6ST-YAP-NOTCH pathway, induces inflammation-induced epithelial regeneration. The chain is Interleukin-6 (IL6) from Oryctolagus cuniculus (Rabbit).